The primary structure comprises 598 residues: Kinetochore-associated protein KNL-2 homolog (598 aa).

Residues 19 to 111 (VVLRDWWLIK…IFGFPPCWER (93 aa)) enclose the SANTA domain. Basic and acidic residues-rich tracts occupy residues 335–344 (AKSSKPEKKG) and 371–381 (KSAENKRKIDA). Disordered stretches follow at residues 335-403 (AKSS…NNAK), 445-500 (KESL…EEAE), 520-542 (PEKK…QKRS), and 572-598 (KDGS…LKIK). Over residues 383 to 392 (KLQSPTSNVA) the composition is skewed to polar residues. Residues 527 to 539 (QKTNAASTDSLGQ) are compositionally biased toward polar residues. The required for localization at centromeres stretch occupies residues 538-572 (GQKRSRSGRVLVSSLEFWRNQIPVYDMDRNLIQVK).

It belongs to the KNL2 family. Expressed in shoot apical meristem, leaf primordia, basal parts of emerging leaves, inflorescence meristems, young inflorescences, developing flower buds, developing sepals and pistils, styles and young siliques.

The protein resides in the nucleus. Its subcellular location is the nucleoplasm. It is found in the nuclear body. It localises to the nucleolus. The protein localises to the chromosome. The protein resides in the centromere. Involved in recognition of centromeres and centromeric localization of the centromere-specific histone CENH3. Required for normal progression of mitosis and meiosis. May play a role in the determination of the epigenetic status of centromeres. Binds DNA and RNA in vitro. The protein is Kinetochore-associated protein KNL-2 homolog of Arabidopsis thaliana (Mouse-ear cress).